The chain runs to 381 residues: Cytochrome b (381 aa).

4 helical membrane-spanning segments follow: residues 33 to 53 (FGSL…FLAM), 77 to 98 (WLIR…FLHV), 113 to 133 (WNIG…GYVL), and 178 to 198 (FFAF…VHLL). The heme b site is built by H83 and H97. Positions 182 and 196 each coordinate heme b. H201 is a binding site for a ubiquinone. A run of 4 helical transmembrane segments spans residues 226-246 (IKDA…ALFS), 288-308 (LGGV…PLLH), 320-340 (VSQT…WIGG), and 347-367 (FIII…VLMP).

This sequence belongs to the cytochrome b family. In terms of assembly, the cytochrome bc1 complex contains 11 subunits: 3 respiratory subunits (MT-CYB, CYC1 and UQCRFS1), 2 core proteins (UQCRC1 and UQCRC2) and 6 low-molecular weight proteins (UQCRH/QCR6, UQCRB/QCR7, UQCRQ/QCR8, UQCR10/QCR9, UQCR11/QCR10 and a cleavage product of UQCRFS1). This cytochrome bc1 complex then forms a dimer. Requires heme b as cofactor.

It is found in the mitochondrion inner membrane. Component of the ubiquinol-cytochrome c reductase complex (complex III or cytochrome b-c1 complex) that is part of the mitochondrial respiratory chain. The b-c1 complex mediates electron transfer from ubiquinol to cytochrome c. Contributes to the generation of a proton gradient across the mitochondrial membrane that is then used for ATP synthesis. This is Cytochrome b (MT-CYB) from Ningaui yvonnae (Southern ningaui).